Here is a 595-residue protein sequence, read N- to C-terminus: Sialic acid-binding Ig-like lectin 12 (595 aa).

The signal sequence occupies residues M1–A18. 2 consecutive Ig-like V-type domains span residues K19 to T142 and A143 to T269. Topologically, residues K19–A481 are extracellular. The cysteines at positions 44 and 104 are disulfide-linked. 4 N-linked (GlcNAc...) asparagine glycosylation sites follow: N140, N179, N230, and N290. Intrachain disulfides connect C166–C299, C171–C231, and C293–C342. One can recognise an Ig-like C2-type 1 domain in the interval P275–R358. N-linked (GlcNAc...) asparagine glycosylation is found at N360, N367, and N385. The 98-residue stretch at P365 to S462 folds into the Ig-like C2-type 2 domain. C401 and C446 form a disulfide bridge. The helical transmembrane segment at F482–V502 threads the bilayer. At R503–K595 the chain is on the cytoplasmic side. Residues P512–E560 form a disordered region. Positions I563–L568 match the ITIM motif motif. 2 positions are modified to phosphotyrosine: Y565 and Y588. Positions Y586–I591 match the SLAM-like motif motif.

The protein belongs to the immunoglobulin superfamily. SIGLEC (sialic acid binding Ig-like lectin) family. Isoform Short is highly expressed in spleen, small intestine and adrenal gland; it is lower expressed in thyroid, placenta, brain, stomach, bone marrow, spinal cord and breast. Isoform Long is highly expressed in spleen, small intestine and bone marrow; it is lower expressed in thyroid, placenta, thymus, trachea, stomach, lung, adrenal gland, fetal brain and testis.

It is found in the membrane. Putative adhesion molecule that mediates sialic-acid dependent binding to cells. The sialic acid recognition site may be masked by cis interactions with sialic acids on the same cell surface. In Homo sapiens (Human), this protein is Sialic acid-binding Ig-like lectin 12 (SIGLEC12).